Reading from the N-terminus, the 279-residue chain is Reaction center protein L chain (279 aa).

Helical transmembrane passes span 33–56 (GFFGVTTLFFSVLGTALIIWGASQ), 85–113 (GLWQIITVCAIGAFVSWALREVEICRKLG), and 116–141 (YHVPIAFSFAILAYVTLVVIRPILMG). (7R,8Z)-bacteriochlorophyll b is bound by residues His154 and His174. Residues 171 to 200 (NPAHMLAITFFFTTTLAMSMHGGLILSAAN) traverse the membrane as a helical segment. Residue His191 coordinates Fe cation. A ubiquinone is bound at residue Phe217. Residues 226 to 252 (GSLGIHRLGLFLALSAAFWSAVCIVIS) form a helical membrane-spanning segment. His231 contacts Fe cation.

The protein belongs to the reaction center PufL/M/PsbA/D family. As to quaternary structure, reaction center is composed of four bacteriochlorophylls, two bacteriopheophytins, two ubiquinones, one iron, and three highly hydrophobic polypeptide chains (designated L, M, and H).

It localises to the cell inner membrane. The reaction center is a membrane-bound complex that mediates the initial photochemical event in the electron transfer process of photosynthesis. The protein is Reaction center protein L chain (pufL) of Rubrivivax gelatinosus (strain NBRC 100245 / IL144).